A 365-amino-acid polypeptide reads, in one-letter code: DNA replication and repair protein RecF (365 aa).

30-37 (GANGQGKT) provides a ligand contact to ATP.

It belongs to the RecF family.

Its subcellular location is the cytoplasm. Functionally, the RecF protein is involved in DNA metabolism; it is required for DNA replication and normal SOS inducibility. RecF binds preferentially to single-stranded, linear DNA. It also seems to bind ATP. The protein is DNA replication and repair protein RecF of Geobacter sulfurreducens (strain ATCC 51573 / DSM 12127 / PCA).